A 445-amino-acid chain; its full sequence is Phosphoglucosamine mutase (445 aa).

Residue serine 102 is the Phosphoserine intermediate of the active site. Serine 102, aspartate 240, aspartate 242, and aspartate 244 together coordinate Mg(2+). At serine 102 the chain carries Phosphoserine.

Belongs to the phosphohexose mutase family. The cofactor is Mg(2+). Activated by phosphorylation.

The catalysed reaction is alpha-D-glucosamine 1-phosphate = D-glucosamine 6-phosphate. In terms of biological role, catalyzes the conversion of glucosamine-6-phosphate to glucosamine-1-phosphate. In Mycolicibacterium gilvum (strain PYR-GCK) (Mycobacterium gilvum (strain PYR-GCK)), this protein is Phosphoglucosamine mutase.